A 1264-amino-acid polypeptide reads, in one-letter code: BRCA2-interacting transcriptional repressor EMSY (1264 aa).

The tract at residues 1–442 (MPVVWPTLLD…LPKPVTATLP (442 aa)) is interaction with BRCA2. The 99-residue stretch at 16–114 (CKRILRKLEL…EWSIEGRRLV (99 aa)) folds into the ENT domain. The interaction with ZMYND11 stretch occupies residues 118–122 (PRLVP). The tract at residues 145-179 (PVPAETASKDGVSCSDEDEKPRKRRRTNSSSSSPV) is disordered. Thr171 carries the post-translational modification Phosphothreonine. Residues Ser173 and Ser177 each carry the phosphoserine modification. Ser192 and Ser200 each carry an O-linked (GlcNAc) serine glycan. Ser202 carries the phosphoserine modification. Residue Thr235 is glycosylated (O-linked (GlcNAc) threonine). The segment covering 364 to 406 (FPKQHQQSPKQQLQQVQQQTQQPVAQPSSVSQQQQPQQSALPP) has biased composition (low complexity). Positions 364-407 (FPKQHQQSPKQQLQQVQQQTQQPVAQPSSVSQQQQPQQSALPPG) are disordered. 2 O-linked (GlcNAc) threonine glycosylation sites follow: Thr465 and Thr470. O-linked (GlcNAc) serine glycosylation occurs at Ser521. The segment covering 660 to 671 (SRVADASNSSAQ) has biased composition (polar residues). Positions 660–700 (SRVADASNSSAQEGKEEPQGYTDSSSSSTESSQSSQDSQPV) are disordered. Low complexity predominate over residues 681–698 (TDSSSSSTESSQSSQDSQ). Phosphoserine occurs at positions 782 and 785. Thr1069 carries an O-linked (GlcNAc) threonine glycan. At Ser1085 the chain carries Phosphoserine. Residues 1232-1264 (QLDDDETAMEQDIDSSTEDGTEPSPSQSAVERS) form a disordered region. Positions 1233-1252 (LDDDETAMEQDIDSSTEDGT) are enriched in acidic residues. A compositionally biased stretch (polar residues) spans 1254–1264 (PSPSQSAVERS).

As to quaternary structure, homodimer. Interacts with the transactivation domain of BRCA2. Interacts with CBX1 (via chromoshadow domain). Interacts with ZMYND11. Does not interact with CBX3 or CBX5. Component of a nuclear receptor-mediated transcription complex composed of at least ZNF335, CCAR2 and EMSY; the complex stimulates the transcription of nuclear receptor target genes such as SOX9 and HOXA1. Within the complex interacts with CCAR2 and ZNF335. Components of this complex may associate with components of a histone methylation complex to form a complex at least composed of ZNF335, HCFC1, CCAR2, EMSY, MKI67, RBBP5, ASH2L and WDR5. Within this complex, interacts with ASH2L and RBBP5.

The protein localises to the nucleus. Its function is as follows. Regulator which is able to repress transcription, possibly via its interaction with a multiprotein chromatin remodeling complex that modifies the chromatin. Its interaction with BRCA2 suggests that it may play a central role in the DNA repair function of BRCA2. Mediates ligand-dependent transcriptional activation by nuclear hormone receptors. The chain is BRCA2-interacting transcriptional repressor EMSY from Mus musculus (Mouse).